A 530-amino-acid polypeptide reads, in one-letter code: Fusaric acid resistance protein FusA (530 aa).

Residues 1–23 form the signal peptide; sequence MQSPATKGTLALAVLAVSLIMAG. The N-palmitoyl cysteine moiety is linked to residue C24. C24 carries S-diacylglycerol cysteine lipidation. 2 disordered regions span residues 375 to 442 and 476 to 530; these read NAGV…RQRA and GVET…PAAR. 2 stretches are compositionally biased toward low complexity: residues 421–430 and 494–530; these read RPQLPAVARR and AAGAAAPAAASGAKPVAAAARPAQVAAAGAAGVPAAR.

It belongs to the outer membrane factor (OMF) (TC 1.B.17) family.

The protein resides in the cell membrane. Functionally, involved in the resistance (detoxification) of the fungal toxin fusaric acid. This Burkholderia cepacia (Pseudomonas cepacia) protein is Fusaric acid resistance protein FusA (fusA).